A 363-amino-acid polypeptide reads, in one-letter code: Peptide chain release factor 1 (363 aa).

Residue glutamine 237 is modified to N5-methylglutamine.

This sequence belongs to the prokaryotic/mitochondrial release factor family. Methylated by PrmC. Methylation increases the termination efficiency of RF1.

The protein localises to the cytoplasm. Its function is as follows. Peptide chain release factor 1 directs the termination of translation in response to the peptide chain termination codons UAG and UAA. The polypeptide is Peptide chain release factor 1 (Hydrogenovibrio crunogenus (strain DSM 25203 / XCL-2) (Thiomicrospira crunogena)).